A 290-amino-acid polypeptide reads, in one-letter code: HTH-type transcriptional regulator BudR (290 aa).

Residues 1–58 (MELRYLRYFVAVAEARNFTRAAHDLGISQPPLSQQIQRLEREIGTPLLRRLTRGVELT) enclose the HTH lysR-type domain. A DNA-binding region (H-T-H motif) is located at residues 18–37 (FTRAAHDLGISQPPLSQQIQ).

It belongs to the LysR transcriptional regulatory family.

Regulator of the budABC operon for 2,3-butanediol synthesis. The chain is HTH-type transcriptional regulator BudR (budR) from Raoultella terrigena (Klebsiella terrigena).